A 156-amino-acid polypeptide reads, in one-letter code: Protein GLUTAMINE DUMPER 4 (156 aa).

The Extracellular portion of the chain corresponds to 1 to 39; the sequence is MRPLSIKPTSLDVARHATSVESFGNHRPPISPWHSPVPY. A helical transmembrane segment spans residues 40 to 60; sequence LFGGLAAMLGLIAFALLILAC. Topologically, residues 61–156 are cytoplasmic; it reads SYWRLSTSGD…AKENEETTSQ (96 aa). A disordered region spans residues 67–87; sequence TSGDDSGERVDEEKESRSGVK. Positions 72-84 are enriched in basic and acidic residues; that stretch reads SGERVDEEKESRS. Positions 99-103 match the VIMAG motif; the sequence is VIMAG. The interval 136-156 is disordered; it reads AGEEKMGDREKAKENEETTSQ.

It belongs to the GLUTAMINE DUMPER 1 (TC 9.B.60) family. As to expression, expressed in the vascular tissues, even in the minor veins of the leaves.

Its subcellular location is the membrane. Probable subunit of an amino acid transporter involved in the regulation of the amino acid metabolism. Stimulates amino acid export by activating nonselective amino acid facilitators. The sequence is that of Protein GLUTAMINE DUMPER 4 (GDU4) from Arabidopsis thaliana (Mouse-ear cress).